The chain runs to 98 residues: Mu-type opioid receptor (98 aa).

Residues 1-9 (YTKMKTATN) are Cytoplasmic-facing. Residues 10–34 (IYIFNLALADALATSTLPFQSVNYL) form a helical membrane-spanning segment. The Extracellular segment spans residues 35–45 (MGTWPFGTILC). Residues 46 to 68 (KIVISIDYYNMFTSIFTLCTMSV) traverse the membrane as a helical segment. At 69–88 (DRYIAVCHPVKALDFRTPRN) the chain is on the cytoplasmic side. A Phosphotyrosine modification is found at Tyr-71. The chain crosses the membrane as a helical span at residues 89-98 (AKTVNVCNWI).

It belongs to the G-protein coupled receptor 1 family. In terms of assembly, forms homooligomers and heterooligomers with other GPCRs, such as OPRD1, OPRK1, OPRL1, NPFFR2, ADRA2A, SSTR2, CNR1 and CCR5 (probably in dimeric forms). Interacts with heterotrimeric G proteins; interaction with a heterotrimeric complex containing GNAI1, GNB1 and GNG2 stabilizes the active conformation of the receptor and increases its affinity for endomorphin-2, the synthetic opioid peptide DAMGO and for morphinan agonists. Interacts with PPL; the interaction disrupts agonist-mediated G-protein activation. Interacts (via C-terminus) with DNAJB4 (via C-terminus). Interacts with calmodulin; the interaction inhibits the constitutive activity of OPRM1; it abolishes basal and attenuates agonist-stimulated G-protein coupling. Interacts with FLNA, PLD2, RANBP9 and WLS and GPM6A. Interacts with RTP4. Interacts with SYP and GNAS. Interacts with RGS9, RGS17, RGS20, RGS4, PPP1R9B and HINT1. In terms of processing, phosphorylated. Differentially phosphorylated in basal and agonist-induced conditions. Agonist-mediated phosphorylation modulates receptor internalization. Phosphorylated by GRK2 in a agonist-dependent manner. Phosphorylated on tyrosine residues; the phosphorylation is involved in agonist-induced G-protein-independent receptor down-regulation. Phosphorylated. Differentially phosphorylated in basal and agonist-induced conditions. Agonist-mediated phosphorylation modulates receptor internalization. Phosphorylated by GRK2 in a agonist-dependent manner. Phosphorylated on tyrosine residues; the phosphorylation is involved in agonist-induced G-protein-independent receptor down-regulation. Post-translationally, ubiquitinated. A basal ubiquitination seems not to be related to degradation. Ubiquitination is increased upon formation of OPRM1:OPRD1 oligomers leading to proteasomal degradation; the ubiquitination is diminished by RTP4.

It is found in the cell membrane. Its subcellular location is the cell projection. The protein localises to the axon. It localises to the perikaryon. The protein resides in the dendrite. It is found in the endosome. Its function is as follows. Receptor for endogenous opioids such as beta-endorphin and endomorphin. Receptor for natural and synthetic opioids including morphine, heroin, DAMGO, fentanyl, etorphine, buprenorphin and methadone. Also activated by enkephalin peptides, such as Met-enkephalin or Met-enkephalin-Arg-Phe, with higher affinity for Met-enkephalin-Arg-Phe. Agonist binding to the receptor induces coupling to an inactive GDP-bound heterotrimeric G-protein complex and subsequent exchange of GDP for GTP in the G-protein alpha subunit leading to dissociation of the G-protein complex with the free GTP-bound G-protein alpha and the G-protein beta-gamma dimer activating downstream cellular effectors. The agonist- and cell type-specific activity is predominantly coupled to pertussis toxin-sensitive G(i) and G(o) G alpha proteins, GNAI1, GNAI2, GNAI3 and GNAO1, and to a lesser extent to pertussis toxin-insensitive G alpha proteins GNAZ and GNA15. They mediate an array of downstream cellular responses, including inhibition of adenylate cyclase activity and both N-type and L-type calcium channels, activation of inward rectifying potassium channels, mitogen-activated protein kinase (MAPK), phospholipase C (PLC), phosphoinositide/protein kinase (PKC), phosphoinositide 3-kinase (PI3K) and regulation of NF-kappa-B. Also couples to adenylate cyclase stimulatory G alpha proteins. The selective temporal coupling to G-proteins and subsequent signaling can be regulated by RGSZ proteins, such as RGS9, RGS17 and RGS4. Phosphorylation by members of the GPRK subfamily of Ser/Thr protein kinases and association with beta-arrestins is involved in short-term receptor desensitization. Beta-arrestins associate with the GPRK-phosphorylated receptor and uncouple it from the G-protein thus terminating signal transduction. The phosphorylated receptor is internalized through endocytosis via clathrin-coated pits which involves beta-arrestins. The activation of the ERK pathway occurs either in a G-protein-dependent or a beta-arrestin-dependent manner and is regulated by agonist-specific receptor phosphorylation. Acts as a class A G-protein coupled receptor (GPCR) which dissociates from beta-arrestin at or near the plasma membrane and undergoes rapid recycling. Receptor down-regulation pathways are varying with the agonist and occur dependent or independent of G-protein coupling. Endogenous ligands induce rapid desensitization, endocytosis and recycling. Heterooligomerization with other GPCRs can modulate agonist binding, signaling and trafficking properties. Involved in neurogenesis. This is Mu-type opioid receptor (OPRM1) from Cavia porcellus (Guinea pig).